Reading from the N-terminus, the 1006-residue chain is DNA ligase 4 (1006 aa).

The interval 1 to 36 is disordered; that stretch reads MDSDDDYNGPADTNPRLEDEESDLDEKYPNRPRNHS. ATP contacts are provided by glutamate 318, lysine 320, leucine 321, arginine 325, glutamate 387, phenylalanine 427, glutamate 487, lysine 492, lysine 509, and lysine 511. Catalysis depends on lysine 320, which acts as the N6-AMP-lysine intermediate. Mg(2+) is bound at residue glutamate 387. Residue glutamate 487 participates in Mg(2+) binding. BRCT domains lie at 718–811 and 890–1002; these read PSGN…PDSL and PSGW…GFQP.

It belongs to the ATP-dependent DNA ligase family. Mg(2+) is required as a cofactor.

It is found in the nucleus. The enzyme catalyses ATP + (deoxyribonucleotide)n-3'-hydroxyl + 5'-phospho-(deoxyribonucleotide)m = (deoxyribonucleotide)n+m + AMP + diphosphate.. Its function is as follows. DNA ligase involved in DNA non-homologous end joining (NHEJ); required for double-strand break (DSB) repair. The chain is DNA ligase 4 (lig4) from Aspergillus oryzae (strain ATCC 42149 / RIB 40) (Yellow koji mold).